The sequence spans 97 residues: UPF0235 protein DET1292 (97 aa).

The protein belongs to the UPF0235 family.

In Dehalococcoides mccartyi (strain ATCC BAA-2266 / KCTC 15142 / 195) (Dehalococcoides ethenogenes (strain 195)), this protein is UPF0235 protein DET1292.